Here is a 214-residue protein sequence, read N- to C-terminus: Probable nicotinate-nucleotide adenylyltransferase (214 aa).

The protein belongs to the NadD family.

The enzyme catalyses nicotinate beta-D-ribonucleotide + ATP + H(+) = deamido-NAD(+) + diphosphate. Its pathway is cofactor biosynthesis; NAD(+) biosynthesis; deamido-NAD(+) from nicotinate D-ribonucleotide: step 1/1. Functionally, catalyzes the reversible adenylation of nicotinate mononucleotide (NaMN) to nicotinic acid adenine dinucleotide (NaAD). The chain is Probable nicotinate-nucleotide adenylyltransferase from Buchnera aphidicola subsp. Acyrthosiphon pisum (strain Tuc7).